A 376-amino-acid chain; its full sequence is Inactive CLIP domain-containing serine protease A28 (376 aa).

The first 19 residues, M1–G19, serve as a signal peptide directing secretion. The region spanning E24–Q80 is the Clip domain. Cystine bridges form between C28-C78, C33-C71, and C39-C79. N41 carries an N-linked (GlcNAc...) asparagine glycan. Residues P85–T106 form a disordered region. Positions N114 to V364 constitute a Peptidase S1 domain. Residues N125 and N279 are each glycosylated (N-linked (GlcNAc...) asparagine). 3 disulfides stabilise this stretch: C251-C321, C280-C301, and C311-C340. An N-linked (GlcNAc...) asparagine glycan is attached at N369.

Belongs to the peptidase S1 family. CLIP subfamily. May form a heterodimer of a light chain and a heavy chain; disulfide-linked. In terms of processing, secreted as a full-length protein. Proteolytically cleaved into two chains which probably remain covalently linked. Cleavage is induced by fungus B.bassiana and Gram-positive or Gram-negative bacteria infection.

The protein resides in the secreted. Functionally, inactive serine protease which plays an essential role in the innate immune response against bacteria, fungi and protozoa infection by activating the melanization cascade. In the melanization cascade, acts downstream of TEP1, SPCLIP1 and CLIPA8 to promote CLIPC9 proteolytic cleavage. In the susceptible strain G3, appears to be dispensable for parasite P.berghei ookinete elimination which occurs by lysis. Required for the melanization of Gram-positive and Gram-negative bacteria. Required for the melanization of fungus B.bassiana. This Anopheles gambiae (African malaria mosquito) protein is Inactive CLIP domain-containing serine protease A28.